The chain runs to 79 residues: Acyl carrier protein (79 aa).

Residues 2-77 (SEIGERVKKI…DATKFLEKNA (76 aa)) form the Carrier domain. Ser37 is modified (O-(pantetheine 4'-phosphoryl)serine).

It belongs to the acyl carrier protein (ACP) family. Post-translationally, 4'-phosphopantetheine is transferred from CoA to a specific serine of apo-ACP by AcpS. This modification is essential for activity because fatty acids are bound in thioester linkage to the sulfhydryl of the prosthetic group.

It localises to the cytoplasm. The protein operates within lipid metabolism; fatty acid biosynthesis. Carrier of the growing fatty acid chain in fatty acid biosynthesis. This chain is Acyl carrier protein, found in Afipia carboxidovorans (strain ATCC 49405 / DSM 1227 / KCTC 32145 / OM5) (Oligotropha carboxidovorans).